The following is a 91-amino-acid chain: Small ribosomal subunit protein bS18 (91 aa).

It belongs to the bacterial ribosomal protein bS18 family. Part of the 30S ribosomal subunit. Forms a tight heterodimer with protein bS6.

Its function is as follows. Binds as a heterodimer with protein bS6 to the central domain of the 16S rRNA, where it helps stabilize the platform of the 30S subunit. In Syntrophotalea carbinolica (strain DSM 2380 / NBRC 103641 / GraBd1) (Pelobacter carbinolicus), this protein is Small ribosomal subunit protein bS18.